We begin with the raw amino-acid sequence, 112 residues long: Divalent-cation tolerance protein CutA (112 aa).

Cu cation contacts are provided by Cys16, His83, and His84.

It belongs to the CutA family. In terms of assembly, homotrimer. The cofactor is Cu cation.

The protein resides in the cytoplasm. In terms of biological role, involved in resistance toward heavy metals. The protein is Divalent-cation tolerance protein CutA of Shigella boydii serotype 18 (strain CDC 3083-94 / BS512).